The chain runs to 802 residues: uncharacterized protein (802 aa).

One can recognise an EF-hand 1 domain in the interval 6 to 41 (SRSEKVKRIFQQFDGNLDGGLSREEMSALVVAVNPR). TPR repeat units follow at residues 229 to 262 (FDGH…QPTD), 264 to 296 (RPHF…AESG), 305 to 338 (PQIY…CPTH), 339 to 372 (YRAL…KPDY), 373 to 406 (ADAH…KPGH), 407 to 440 (VDAL…WPNH), and 442 to 474 (RAQL…TNRV). The EF-hand 2 domain occupies 595–630 (AIKAINEKILSVLDDSGSGRVDLGMFYAVIAPLCGG).

This is an uncharacterized protein from Arabidopsis thaliana (Mouse-ear cress).